A 155-amino-acid chain; its full sequence is 3-hydroxyacyl-[acyl-carrier-protein] dehydratase FabZ (155 aa).

Histidine 54 is a catalytic residue.

This sequence belongs to the thioester dehydratase family. FabZ subfamily.

Its subcellular location is the cytoplasm. The enzyme catalyses a (3R)-hydroxyacyl-[ACP] = a (2E)-enoyl-[ACP] + H2O. Involved in unsaturated fatty acids biosynthesis. Catalyzes the dehydration of short chain beta-hydroxyacyl-ACPs and long chain saturated and unsaturated beta-hydroxyacyl-ACPs. In Burkholderia ambifaria (strain MC40-6), this protein is 3-hydroxyacyl-[acyl-carrier-protein] dehydratase FabZ.